Consider the following 201-residue polypeptide: Adenylyl-sulfate kinase (201 aa).

Residue 35-42 coordinates ATP; that stretch reads GLSGSGKS. Residue serine 109 is the Phosphoserine intermediate of the active site.

The protein belongs to the APS kinase family.

The catalysed reaction is adenosine 5'-phosphosulfate + ATP = 3'-phosphoadenylyl sulfate + ADP + H(+). The protein operates within sulfur metabolism; hydrogen sulfide biosynthesis; sulfite from sulfate: step 2/3. In terms of biological role, catalyzes the synthesis of activated sulfate. The polypeptide is Adenylyl-sulfate kinase (Enterobacter sp. (strain 638)).